A 951-amino-acid chain; its full sequence is MEPRAATTGELVRAASPSFQARLWKNLQLGVGKGKGGGGGRAGGPEHRTAATPTPSPPPPGTTQDALAGVGSTGSRWSGFKKRKQVLDRVFSSSQPNLCCSSPEPLEPGGAGRAEQGSTLRRRLREHLLPVAKGSSTATGTGGVTPPGGRSPDSAPSSSSASSSLSSSPQPPPRGDRVRDESTRRGGPGVHLCHQKSSSLPGTACLEQLLEPAPPPAEPARGPAEPQALQKDIERDCSQKISTVGNSNADVPLADPGMYQLDITLRRGQSLAARDRGGTSDPYVKFKIGRKEVFRSKIIHKNLNPVWEEKACVLIDHLREPLYIKVFDYDFGLQDDFMGSAFLDLTQLELNRSTDVTLTLKDPHYPDHDLGIILLSVILTPKEGEHRDVTMLMRKSWKRSSKFQTQSLRLSDQHRKSHLWRGIVSITLIEGRDLKAMDSNGLSDPYVKFRLGHQKYKSKIMPKTLNPQWREQFDFHLYEERGGIMDITAWDKDAGKRDDFIGRCQVDLSSLSREQTHKLELHLEEGEGHLVLLVTLTASATVCISDLSVNSMEDQKEREEILKRYSPLRIFNNLKDVGFLQVKVIRAEGLMAADVTGKSDPFCVVELNNDRLLTHTVYKNLNPEWNKVFTFNIKDIHSVLEVTVYDEDRDRSADFLGRVAIPLLSIQNGEQKAYVLKNKQLTGPTKGVIYLEIDVIFNAVKASLRTLIPKERKYIEEENRLSKQLLLRNFIRTKRCVIVLVNAAYYVNSCFDWDSPPRSLAAFVLFLLIVWNFELYMIPLLLLLLLTWNYFLIISGKDNRQRDTVVEDMLEDEEEEDDRDDKDGEKKGFINKIYAIQEVCVSVQNILDEVASLGERIKNTFNWTVPFLSWLAIVALCVFTAILYFIPLRYIVLVWGINKFTKKLRSPYAIDNNELLDFLSRVPSDVQVVQYQELKPDHSHSPYKRKKNNLG.

Disordered regions lie at residues 29 to 79 (LGVG…RWSG), 92 to 117 (SSSQPNLCCSSPEPLEPGGAGRAEQG), 129 to 198 (LPVA…QKSS), and 210 to 231 (LEPAPPPAEPARGPAEPQALQK). A compositionally biased stretch (gly residues) spans 31-43 (VGKGKGGGGGRAG). Residues 147–168 (PGGRSPDSAPSSSSASSSLSSS) are compositionally biased toward low complexity. Residues 174 to 184 (RGDRVRDESTR) show a composition bias toward basic and acidic residues. A compositionally biased stretch (low complexity) spans 219–228 (PARGPAEPQA). C2 domains follow at residues 240–358 (KIST…DVTL), 404–521 (QTQS…KLEL), and 555–676 (QKER…AYVL). D275, D281, D328, D330, D336, D438, D444, D491, D493, D499, D594, D600, D646, D648, and D654 together coordinate Ca(2+). The next 2 membrane-spanning stretches (helical) occupy residues 763-783 (FVLFLLIVWNFELYMIPLLLL) and 866-886 (PFLSWLAIVALCVFTAILYFI).

Belongs to the MCTP family. It depends on Ca(2+) as a cofactor.

It is found in the cytoplasmic vesicle. The protein resides in the secretory vesicle. Its subcellular location is the synaptic vesicle membrane. The protein localises to the recycling endosome. It localises to the endoplasmic reticulum membrane. Functionally, calcium sensor which is essential for the stabilization of normal baseline neurotransmitter release and for the induction and long-term maintenance of presynaptic homeostatic plasticity. In Mus musculus (Mouse), this protein is Multiple C2 and transmembrane domain-containing protein 1.